Consider the following 272-residue polypeptide: Aurora kinase (272 aa).

The region spanning 10–263 is the Protein kinase domain; the sequence is FEIGRLLGRG…LTEALNHPFI (254 aa). Residues 16–24 and K39 each bind ATP; that span reads LGRGKFGQV. D134 functions as the Proton acceptor in the catalytic mechanism.

It belongs to the protein kinase superfamily. Ser/Thr protein kinase family. Aurora subfamily.

The protein localises to the nucleus. The protein resides in the cytoplasm. Its subcellular location is the cytoskeleton. It localises to the spindle. It is found in the chromosome. The protein localises to the centromere. The protein resides in the kinetochore. The enzyme catalyses L-seryl-[protein] + ATP = O-phospho-L-seryl-[protein] + ADP + H(+). It carries out the reaction L-threonyl-[protein] + ATP = O-phospho-L-threonyl-[protein] + ADP + H(+). In terms of biological role, component of the chromosomal passenger complex (CPC), a complex that acts as a key regulator of chromosome segregation and cytokinesis. Has a role in error-correction of aberrent kinetochore-microtubule attachments to ensure that sister kinetochores become bioriented and connect to opposite poles by promoting spindle assembly checkpoint signaling. The polypeptide is Aurora kinase (IPL1) (Encephalitozoon cuniculi (strain GB-M1) (Microsporidian parasite)).